Reading from the N-terminus, the 170-residue chain is Large ribosomal subunit protein uL11 (170 aa).

This sequence belongs to the universal ribosomal protein uL11 family. In terms of assembly, part of the ribosomal stalk of the 50S ribosomal subunit. Interacts with L10 and the large rRNA to form the base of the stalk. L10 forms an elongated spine to which L12 dimers bind in a sequential fashion forming a multimeric L10(L12)X complex.

In terms of biological role, forms part of the ribosomal stalk which helps the ribosome interact with GTP-bound translation factors. This chain is Large ribosomal subunit protein uL11, found in Sulfolobus acidocaldarius (strain ATCC 33909 / DSM 639 / JCM 8929 / NBRC 15157 / NCIMB 11770).